Consider the following 301-residue polypeptide: GTPase Era (301 aa).

The 169-residue stretch at tyrosine 7–glutamate 175 folds into the Era-type G domain. The tract at residues glycine 15–serine 22 is G1. Glycine 15–serine 22 provides a ligand contact to GTP. Residues glutamine 41–histidine 45 form a G2 region. The tract at residues aspartate 62 to glycine 65 is G3. GTP contacts are provided by residues aspartate 62 to leucine 66 and asparagine 124 to aspartate 127. The segment at asparagine 124–aspartate 127 is G4. The segment at isoleucine 154–alanine 156 is G5. The KH type-2 domain maps to leucine 206–serine 283.

Belongs to the TRAFAC class TrmE-Era-EngA-EngB-Septin-like GTPase superfamily. Era GTPase family. Monomer.

It localises to the cytoplasm. It is found in the cell inner membrane. In terms of biological role, an essential GTPase that binds both GDP and GTP, with rapid nucleotide exchange. Plays a role in 16S rRNA processing and 30S ribosomal subunit biogenesis and possibly also in cell cycle regulation and energy metabolism. The sequence is that of GTPase Era from Shigella dysenteriae serotype 1 (strain Sd197).